Reading from the N-terminus, the 461-residue chain is tRNA modification GTPase MnmE (461 aa).

(6S)-5-formyl-5,6,7,8-tetrahydrofolate-binding residues include Arg27, Glu89, and Arg128. Residues 224-382 enclose the TrmE-type G domain; the sequence is GLKTAIVGRP…LEALIKKLFF (159 aa). Asn234 contributes to the K(+) binding site. GTP-binding positions include 234 to 239, 253 to 259, and 278 to 281; these read NVGKSS, TDVAGTT, and DTAG. Ser238 is a binding site for Mg(2+). Thr253, Val255, and Thr258 together coordinate K(+). Thr259 is a binding site for Mg(2+). Residue Lys461 coordinates (6S)-5-formyl-5,6,7,8-tetrahydrofolate.

The protein belongs to the TRAFAC class TrmE-Era-EngA-EngB-Septin-like GTPase superfamily. TrmE GTPase family. As to quaternary structure, homodimer. Heterotetramer of two MnmE and two MnmG subunits. The cofactor is K(+).

It localises to the cytoplasm. In terms of biological role, exhibits a very high intrinsic GTPase hydrolysis rate. Involved in the addition of a carboxymethylaminomethyl (cmnm) group at the wobble position (U34) of certain tRNAs, forming tRNA-cmnm(5)s(2)U34. In Lactobacillus delbrueckii subsp. bulgaricus (strain ATCC BAA-365 / Lb-18), this protein is tRNA modification GTPase MnmE.